The chain runs to 376 residues: Actin-related protein T1 (376 aa).

This sequence belongs to the actin family.

The protein localises to the cytoplasm. The protein resides in the cytoskeleton. Its subcellular location is the nucleus. It is found in the cytoplasmic vesicle. It localises to the secretory vesicle. The protein localises to the acrosome. Functionally, negatively regulates the Hedgehog (SHH) signaling. Binds to the promoter of the SHH signaling mediator, GLI1, and inhibits its expression. The sequence is that of Actin-related protein T1 (Actrt1) from Rattus norvegicus (Rat).